Consider the following 229-residue polypeptide: Peptidyl-tRNA hydrolase (229 aa).

A tRNA-binding site is contributed by Tyr17. His22 serves as the catalytic Proton acceptor. TRNA-binding residues include Phe74, Asn76, and Asn122. Residues 194–229 are disordered; that stretch reads AGKTTRPRKPVRQTANAEASNNSPEASATPQNKDNT. Positions 207-223 are enriched in low complexity; it reads TANAEASNNSPEASATP.

It belongs to the PTH family. In terms of assembly, monomer.

It is found in the cytoplasm. It carries out the reaction an N-acyl-L-alpha-aminoacyl-tRNA + H2O = an N-acyl-L-amino acid + a tRNA + H(+). Hydrolyzes ribosome-free peptidyl-tRNAs (with 1 or more amino acids incorporated), which drop off the ribosome during protein synthesis, or as a result of ribosome stalling. In terms of biological role, catalyzes the release of premature peptidyl moieties from peptidyl-tRNA molecules trapped in stalled 50S ribosomal subunits, and thus maintains levels of free tRNAs and 50S ribosomes. The protein is Peptidyl-tRNA hydrolase of Desulfovibrio desulfuricans (strain ATCC 27774 / DSM 6949 / MB).